An 817-amino-acid chain; its full sequence is E3 ubiquitin-protein ligase TRIM9 (817 aa).

An RING-type zinc finger spans residues 10 to 50 (CPVCGSFYREPIILPCSHNLCQACARNILVQTPESESPQSR). Thr-41 carries the post-translational modification Phosphothreonine. Ser-44, Ser-46, Ser-49, and Ser-53 each carry phosphoserine. 2 consecutive B box-type zinc fingers follow at residues 163-212 (AAAL…LVPP) and 224-266 (RKVS…VKAL). Zn(2+) contacts are provided by Cys-168, Cys-171, Cys-193, His-198, Cys-229, His-232, Cys-252, and His-258. The stretch at 273–340 (HKSQLSQALN…KAQLLARVNK (68 aa)) forms a coiled coil. In terms of domain architecture, COS spans 374-432 (IKENDPSGFLQISDALIRRVHLTEDQWGKGTLTPRMTTDFDLSLDNSPLLQSIHQLDFV). Residues 440–535 (VPATPILQLE…KTLVLQTSEA (96 aa)) form the Fibronectin type-III domain. The disordered stretch occupies residues 535–557 (AAGAHETKPMKDTDSEEQTLPFP). A compositionally biased stretch (basic and acidic residues) spans 537 to 547 (GAHETKPMKDT). Residues 613–794 (ETQSASYSQL…VQVSLWAPGL (182 aa)) enclose the B30.2/SPRY domain.

The protein belongs to the TRIM/RBCC family. Interacts with SNAP25. Post-translationally, auto-ubiquitinated. Brain. Expression is higher in the cerebral cortex and hippocampus (at protein level). Its expression is mainly confined to the central nervous system. The developing neocortex, the dorsal thalamus, the midbrain, the basal area of the hindbrain and spinal cord show high level of expression during embryogenesis. In adult brain, it is detected in the Purkinje cells of the cerebellum, in the hippocampus, and in the cortex.

It localises to the cytoplasm. It is found in the cell projection. Its subcellular location is the dendrite. The protein localises to the cytoplasmic vesicle. The protein resides in the secretory vesicle. It localises to the synaptic vesicle. It is found in the synapse. Its subcellular location is the cytoskeleton. The enzyme catalyses S-ubiquitinyl-[E2 ubiquitin-conjugating enzyme]-L-cysteine + [acceptor protein]-L-lysine = [E2 ubiquitin-conjugating enzyme]-L-cysteine + N(6)-ubiquitinyl-[acceptor protein]-L-lysine.. It participates in protein modification; protein ubiquitination. Its function is as follows. E3 ubiquitin-protein ligase which ubiquitinates itself in cooperation with an E2 enzyme UBE2D2/UBC4 and serves as a targeting signal for proteasomal degradation. May play a role in regulation of neuronal functions. May act as a regulator of synaptic vesicle exocytosis by controlling the availability of SNAP25 for the SNARE complex formation. In Mus musculus (Mouse), this protein is E3 ubiquitin-protein ligase TRIM9 (Trim9).